Here is a 458-residue protein sequence, read N- to C-terminus: Bifunctional protein GlmU (458 aa).

A pyrophosphorylase region spans residues 1 to 230 (MSLPTYSKLN…EWQVAGINSK (230 aa)). Residues 14–17 (LAAG), Lys28, Gln79, and 84–85 (GT) contribute to the UDP-N-acetyl-alpha-D-glucosamine site. Asp108 lines the Mg(2+) pocket. Residues Gly141, Glu155, Asn170, and Asn228 each coordinate UDP-N-acetyl-alpha-D-glucosamine. Asn228 contacts Mg(2+). The interval 231 to 251 (QDLAALERVYQGRYAARLLAK) is linker. Residues 252-458 (GVTLADPSRI…NWKRPEKVKK (207 aa)) form an N-acetyltransferase region. UDP-N-acetyl-alpha-D-glucosamine contacts are provided by Arg334 and Lys352. The Proton acceptor role is filled by His364. 2 residues coordinate UDP-N-acetyl-alpha-D-glucosamine: Tyr367 and Asn378. Acetyl-CoA-binding positions include Ala381, 387 to 388 (NY), Ser406, Ala424, and Arg441.

This sequence in the N-terminal section; belongs to the N-acetylglucosamine-1-phosphate uridyltransferase family. It in the C-terminal section; belongs to the transferase hexapeptide repeat family. Homotrimer. Mg(2+) serves as cofactor.

It is found in the cytoplasm. The enzyme catalyses alpha-D-glucosamine 1-phosphate + acetyl-CoA = N-acetyl-alpha-D-glucosamine 1-phosphate + CoA + H(+). It carries out the reaction N-acetyl-alpha-D-glucosamine 1-phosphate + UTP + H(+) = UDP-N-acetyl-alpha-D-glucosamine + diphosphate. The protein operates within nucleotide-sugar biosynthesis; UDP-N-acetyl-alpha-D-glucosamine biosynthesis; N-acetyl-alpha-D-glucosamine 1-phosphate from alpha-D-glucosamine 6-phosphate (route II): step 2/2. It participates in nucleotide-sugar biosynthesis; UDP-N-acetyl-alpha-D-glucosamine biosynthesis; UDP-N-acetyl-alpha-D-glucosamine from N-acetyl-alpha-D-glucosamine 1-phosphate: step 1/1. Its pathway is bacterial outer membrane biogenesis; LPS lipid A biosynthesis. In terms of biological role, catalyzes the last two sequential reactions in the de novo biosynthetic pathway for UDP-N-acetylglucosamine (UDP-GlcNAc). The C-terminal domain catalyzes the transfer of acetyl group from acetyl coenzyme A to glucosamine-1-phosphate (GlcN-1-P) to produce N-acetylglucosamine-1-phosphate (GlcNAc-1-P), which is converted into UDP-GlcNAc by the transfer of uridine 5-monophosphate (from uridine 5-triphosphate), a reaction catalyzed by the N-terminal domain. The sequence is that of Bifunctional protein GlmU from Methylobacillus flagellatus (strain ATCC 51484 / DSM 6875 / VKM B-1610 / KT).